The primary structure comprises 262 residues: Glutamate racemase (262 aa).

Residues 5–6 (DS) and 37–38 (YG) each bind substrate. Residue Cys-69 is the Proton donor/acceptor of the active site. 70-71 (NT) is a binding site for substrate. The active-site Proton donor/acceptor is Cys-181. 182-183 (TH) lines the substrate pocket.

Belongs to the aspartate/glutamate racemases family.

The catalysed reaction is L-glutamate = D-glutamate. It participates in cell wall biogenesis; peptidoglycan biosynthesis. Its function is as follows. Provides the (R)-glutamate required for cell wall biosynthesis. The sequence is that of Glutamate racemase from Buchnera aphidicola subsp. Acyrthosiphon pisum (strain 5A).